A 346-amino-acid chain; its full sequence is Leucine zipper protein 2 (346 aa).

Residues 1-19 (MKFSPAHYLLPLLPALVLS) form the signal peptide. Residues 16–211 (LVLSTRQDYE…QMKAMKETVQ (196 aa)) adopt a coiled-coil conformation. N-linked (GlcNAc...) asparagine glycosylation is present at asparagine 133. The segment at 164-192 (LRYGKKDLLFKAQQLTDLEQKLAVAKNEL) is leucine-zipper. Residues 225 to 346 (ALSLITSNPT…GMAAREEKIL (122 aa)) form a disordered region. The span at 250-261 (AAAKSKPQQSAS) shows a compositional bias: low complexity. Over residues 262–283 (GNNESSQVESTKEGSPSTTACD) the composition is skewed to polar residues. Asparagine 264 carries N-linked (GlcNAc...) asparagine glycosylation. Residues 286–298 (DEGRTCSIKHKES) are compositionally biased toward basic and acidic residues. An N-linked (GlcNAc...) asparagine glycan is attached at asparagine 302.

The protein localises to the secreted. The sequence is that of Leucine zipper protein 2 (LUZP2) from Pongo abelii (Sumatran orangutan).